Here is a 350-residue protein sequence, read N- to C-terminus: UDP-N-acetylenolpyruvoylglucosamine reductase (350 aa).

The FAD-binding PCMH-type domain occupies 24–195 (HVDATARWLL…VAVEFNLPLL (172 aa)). Residue R172 is part of the active site. The active-site Proton donor is S245. Residue E342 is part of the active site.

Belongs to the MurB family. Requires FAD as cofactor.

Its subcellular location is the cytoplasm. It carries out the reaction UDP-N-acetyl-alpha-D-muramate + NADP(+) = UDP-N-acetyl-3-O-(1-carboxyvinyl)-alpha-D-glucosamine + NADPH + H(+). Its pathway is cell wall biogenesis; peptidoglycan biosynthesis. In terms of biological role, cell wall formation. The protein is UDP-N-acetylenolpyruvoylglucosamine reductase of Xanthomonas campestris pv. campestris (strain 8004).